The following is a 571-amino-acid chain: Septation ring formation regulator EzrA (571 aa).

The Extracellular segment spans residues 1-3 (MYY). The helical transmembrane segment at 4-22 (MLIGFIIVVIAVIGAGYIL) threads the bilayer. Over 23-571 (KRKHYQRINE…ESKVSVDDIE (549 aa)) the chain is Cytoplasmic. 4 coiled-coil regions span residues 248–298 (LAQM…DTLE), 326–374 (DALA…ASGE), 400–437 (KFAEELRSLRKDELEARDDAERMRRAIITLDRKMERER), and 478–529 (RIAE…ENHF).

The protein belongs to the EzrA family.

Its subcellular location is the cell membrane. Negative regulator of FtsZ ring formation; modulates the frequency and position of FtsZ ring formation. Inhibits FtsZ ring formation at polar sites. Interacts either with FtsZ or with one of its binding partners to promote depolymerization. This chain is Septation ring formation regulator EzrA, found in Listeria monocytogenes serotype 4b (strain CLIP80459).